Reading from the N-terminus, the 490-residue chain is ATP synthase subunit beta, plastid (490 aa).

170 to 177 contacts ATP; that stretch reads GGAGVGKT.

Belongs to the ATPase alpha/beta chains family. F-type ATPases have 2 components, CF(1) - the catalytic core - and CF(0) - the membrane proton channel. CF(1) has five subunits: alpha(3), beta(3), gamma(1), delta(1), epsilon(1). CF(0) has four main subunits: a(1), b(1), b'(1) and c(9-12).

The protein localises to the plastid membrane. The enzyme catalyses ATP + H2O + 4 H(+)(in) = ADP + phosphate + 5 H(+)(out). In terms of biological role, produces ATP from ADP in the presence of a proton gradient across the membrane. The catalytic sites are hosted primarily by the beta subunits. The chain is ATP synthase subunit beta, plastid (atpB) from Cuscuta japonica (Japanese dodder).